The primary structure comprises 185 residues: Elongation factor P (185 aa).

It belongs to the elongation factor P family.

The protein localises to the cytoplasm. It functions in the pathway protein biosynthesis; polypeptide chain elongation. Its function is as follows. Involved in peptide bond synthesis. Stimulates efficient translation and peptide-bond synthesis on native or reconstituted 70S ribosomes in vitro. Probably functions indirectly by altering the affinity of the ribosome for aminoacyl-tRNA, thus increasing their reactivity as acceptors for peptidyl transferase. This is Elongation factor P from Bacillus cytotoxicus (strain DSM 22905 / CIP 110041 / 391-98 / NVH 391-98).